Here is a 94-residue protein sequence, read N- to C-terminus: Small ribosomal subunit protein bS6 (94 aa).

It belongs to the bacterial ribosomal protein bS6 family.

In terms of biological role, binds together with bS18 to 16S ribosomal RNA. The chain is Small ribosomal subunit protein bS6 from Fusobacterium nucleatum subsp. nucleatum (strain ATCC 25586 / DSM 15643 / BCRC 10681 / CIP 101130 / JCM 8532 / KCTC 2640 / LMG 13131 / VPI 4355).